Reading from the N-terminus, the 1412-residue chain is DNA-directed RNA polymerase subunit beta' (1412 aa).

Zn(2+)-binding residues include C70, C72, C85, and C88. The Mg(2+) site is built by D460, D462, and D464. Zn(2+)-binding residues include C819, C893, C900, and C903. Residues 1391-1412 (AEESFEFGTPETPAAEQQHSGE) are disordered.

The protein belongs to the RNA polymerase beta' chain family. In terms of assembly, the RNAP catalytic core consists of 2 alpha, 1 beta, 1 beta' and 1 omega subunit. When a sigma factor is associated with the core the holoenzyme is formed, which can initiate transcription. It depends on Mg(2+) as a cofactor. Zn(2+) is required as a cofactor.

It carries out the reaction RNA(n) + a ribonucleoside 5'-triphosphate = RNA(n+1) + diphosphate. DNA-dependent RNA polymerase catalyzes the transcription of DNA into RNA using the four ribonucleoside triphosphates as substrates. The chain is DNA-directed RNA polymerase subunit beta' from Paraburkholderia phytofirmans (strain DSM 17436 / LMG 22146 / PsJN) (Burkholderia phytofirmans).